We begin with the raw amino-acid sequence, 345 residues long: Anthranilate phosphoribosyltransferase (345 aa).

Residues Gly-84, 87–88 (GD), Thr-92, 94–97 (NIST), 112–120 (KHGNRSVSS), and Ser-124 each bind 5-phospho-alpha-D-ribose 1-diphosphate. Gly-84 contributes to the anthranilate binding site. Ser-96 is a Mg(2+) binding site. Asn-115 provides a ligand contact to anthranilate. Arg-170 is an anthranilate binding site. Mg(2+) contacts are provided by Asp-229 and Glu-230.

The protein belongs to the anthranilate phosphoribosyltransferase family. Homodimer. Mg(2+) is required as a cofactor.

It carries out the reaction N-(5-phospho-beta-D-ribosyl)anthranilate + diphosphate = 5-phospho-alpha-D-ribose 1-diphosphate + anthranilate. The protein operates within amino-acid biosynthesis; L-tryptophan biosynthesis; L-tryptophan from chorismate: step 2/5. Functionally, catalyzes the transfer of the phosphoribosyl group of 5-phosphorylribose-1-pyrophosphate (PRPP) to anthranilate to yield N-(5'-phosphoribosyl)-anthranilate (PRA). The sequence is that of Anthranilate phosphoribosyltransferase from Xanthomonas campestris pv. campestris (strain 8004).